The following is a 154-amino-acid chain: Endoribonuclease YbeY (154 aa).

Zn(2+) is bound by residues H115, H119, and H125.

This sequence belongs to the endoribonuclease YbeY family. The cofactor is Zn(2+).

It localises to the cytoplasm. Single strand-specific metallo-endoribonuclease involved in late-stage 70S ribosome quality control and in maturation of the 3' terminus of the 16S rRNA. This Halorhodospira halophila (strain DSM 244 / SL1) (Ectothiorhodospira halophila (strain DSM 244 / SL1)) protein is Endoribonuclease YbeY.